The primary structure comprises 203 residues: Glycerol-3-phosphate acyltransferase (203 aa).

The next 6 membrane-spanning stretches (helical) occupy residues 5 to 25 (IASI…FSLL), 50 to 70 (TCGF…GALP), 72 to 92 (IAAQ…TAAM), 115 to 135 (VVLT…AVTF), 140 to 160 (ISAV…AVLL), and 162 to 182 (LGML…AIVF).

Belongs to the PlsY family. As to quaternary structure, probably interacts with PlsX.

Its subcellular location is the cell membrane. It catalyses the reaction an acyl phosphate + sn-glycerol 3-phosphate = a 1-acyl-sn-glycero-3-phosphate + phosphate. The protein operates within lipid metabolism; phospholipid metabolism. Its function is as follows. Catalyzes the transfer of an acyl group from acyl-phosphate (acyl-PO(4)) to glycerol-3-phosphate (G3P) to form lysophosphatidic acid (LPA). This enzyme utilizes acyl-phosphate as fatty acyl donor, but not acyl-CoA or acyl-ACP. The chain is Glycerol-3-phosphate acyltransferase from Roseiflexus sp. (strain RS-1).